A 380-amino-acid polypeptide reads, in one-letter code: Cytochrome b (380 aa).

4 helical membrane-spanning segments follow: residues 33–53 (FGSL…FLAM), 77–98 (WLIR…YLHI), 113–133 (WNVG…GYVL), and 178–198 (FFAF…LHLL). Positions 83 and 97 each coordinate heme b. The heme b site is built by His-182 and His-196. His-201 provides a ligand contact to a ubiquinone. 4 consecutive transmembrane segments (helical) span residues 226 to 246 (YKDL…ALFS), 288 to 308 (LGGV…PILH), 320 to 340 (FSQI…WIGG), and 347 to 367 (YIII…VFFP).

The protein belongs to the cytochrome b family. As to quaternary structure, the cytochrome bc1 complex contains 3 respiratory subunits (MT-CYB, CYC1 and UQCRFS1), 2 core proteins (UQCRC1 and UQCRC2) and probably 6 low-molecular weight proteins. Heme b is required as a cofactor.

It is found in the mitochondrion inner membrane. In terms of biological role, component of the ubiquinol-cytochrome c reductase complex (complex III or cytochrome b-c1 complex) that is part of the mitochondrial respiratory chain. The b-c1 complex mediates electron transfer from ubiquinol to cytochrome c. Contributes to the generation of a proton gradient across the mitochondrial membrane that is then used for ATP synthesis. In Apogon semilineatus (Half-lined cardinal), this protein is Cytochrome b (mt-cyb).